The following is a 361-amino-acid chain: tRNA/tmRNA (uracil-C(5))-methyltransferase (361 aa).

The S-adenosyl-L-methionine site is built by Gln185, Tyr213, Asn218, Glu234, and Asp294. Cys319 acts as the Nucleophile in catalysis. Glu353 acts as the Proton acceptor in catalysis.

Belongs to the class I-like SAM-binding methyltransferase superfamily. RNA M5U methyltransferase family. TrmA subfamily.

The catalysed reaction is uridine(54) in tRNA + S-adenosyl-L-methionine = 5-methyluridine(54) in tRNA + S-adenosyl-L-homocysteine + H(+). It catalyses the reaction uridine(341) in tmRNA + S-adenosyl-L-methionine = 5-methyluridine(341) in tmRNA + S-adenosyl-L-homocysteine + H(+). Its function is as follows. Dual-specificity methyltransferase that catalyzes the formation of 5-methyluridine at position 54 (m5U54) in all tRNAs, and that of position 341 (m5U341) in tmRNA (transfer-mRNA). In Azotobacter vinelandii (strain DJ / ATCC BAA-1303), this protein is tRNA/tmRNA (uracil-C(5))-methyltransferase.